The following is a 353-amino-acid chain: Photosystem II protein D1 (353 aa).

Residue Thr2 is modified to N-acetylthreonine. At Thr2 the chain carries Phosphothreonine. A run of 3 helical transmembrane segments spans residues 29 to 46 (YIGW…TATS), 118 to 133 (HFLL…EWEL), and 142 to 156 (WIAV…AAAA). His118 provides a ligand contact to chlorophyll a. A pheophytin a-binding site is contributed by Tyr126. [CaMn4O5] cluster contacts are provided by Asp170 and Glu189. A helical transmembrane segment spans residues 197–218 (FHMLGVAGVFGGSLFSAMHGSL). His198 serves as a coordination point for chlorophyll a. A quinone is bound by residues His215 and 264–265 (SF). His215 contributes to the Fe cation binding site. Residue His272 coordinates Fe cation. The chain crosses the membrane as a helical span at residues 274-288 (FLAAWPVVGIWFTAL). Residues His332, Glu333, Asp342, and Ala344 each coordinate [CaMn4O5] cluster. Positions 345–353 (SVDAPSING) are excised as a propeptide.

This sequence belongs to the reaction center PufL/M/PsbA/D family. PSII is composed of 1 copy each of membrane proteins PsbA, PsbB, PsbC, PsbD, PsbE, PsbF, PsbH, PsbI, PsbJ, PsbK, PsbL, PsbM, PsbT, PsbX, PsbY, PsbZ, Psb30/Ycf12, at least 3 peripheral proteins of the oxygen-evolving complex and a large number of cofactors. It forms dimeric complexes. The D1/D2 heterodimer binds P680, chlorophylls that are the primary electron donor of PSII, and subsequent electron acceptors. It shares a non-heme iron and each subunit binds pheophytin, quinone, additional chlorophylls, carotenoids and lipids. D1 provides most of the ligands for the Mn4-Ca-O5 cluster of the oxygen-evolving complex (OEC). There is also a Cl(-1) ion associated with D1 and D2, which is required for oxygen evolution. The PSII complex binds additional chlorophylls, carotenoids and specific lipids. is required as a cofactor. Post-translationally, tyr-161 forms a radical intermediate that is referred to as redox-active TyrZ, YZ or Y-Z. In terms of processing, C-terminally processed by CTPA; processing is essential to allow assembly of the oxygen-evolving complex and thus photosynthetic growth.

The protein localises to the plastid. Its subcellular location is the chloroplast thylakoid membrane. It carries out the reaction 2 a plastoquinone + 4 hnu + 2 H2O = 2 a plastoquinol + O2. Its function is as follows. Photosystem II (PSII) is a light-driven water:plastoquinone oxidoreductase that uses light energy to abstract electrons from H(2)O, generating O(2) and a proton gradient subsequently used for ATP formation. It consists of a core antenna complex that captures photons, and an electron transfer chain that converts photonic excitation into a charge separation. The D1/D2 (PsbA/PsbD) reaction center heterodimer binds P680, the primary electron donor of PSII as well as several subsequent electron acceptors. This chain is Photosystem II protein D1, found in Adiantum capillus-veneris (Maidenhair fern).